The following is a 93-amino-acid chain: Cell division protein FtsB (93 aa).

Residues 1 to 3 (MRL) lie on the Cytoplasmic side of the membrane. The chain crosses the membrane as a helical span at residues 4 to 21 (FILVLTLLFGWLQYTLWF). The Periplasmic segment spans residues 22 to 93 (GKNGVSDYYT…FYRIVGEENQ (72 aa)). Residues 42 to 75 (VNTKLQARNSEMYAEIDDLKQGLDAIEERARHEL) are a coiled coil.

The protein belongs to the FtsB family. Part of a complex composed of FtsB, FtsL and FtsQ.

Its subcellular location is the cell inner membrane. Functionally, essential cell division protein. May link together the upstream cell division proteins, which are predominantly cytoplasmic, with the downstream cell division proteins, which are predominantly periplasmic. The protein is Cell division protein FtsB of Vibrio vulnificus (strain YJ016).